The following is a 751-amino-acid chain: Zinc finger protein 184 (751 aa).

The KRAB domain maps to 28 to 99; sequence VTFKDVIVDF…EPSIPVGTCA (72 aa). A phosphoserine mark is found at Ser117, Ser122, and Ser199. The span at 191 to 202 shows a compositional bias: polar residues; that stretch reads SNLVTQEPSPEE. The disordered stretch occupies residues 191-212; the sequence is SNLVTQEPSPEETSTKRSIKQN. Lys206 is covalently cross-linked (Glycyl lysine isopeptide (Lys-Gly) (interchain with G-Cter in SUMO2)). 19 C2H2-type zinc fingers span residues 222 to 244, 250 to 272, 278 to 300, 306 to 328, 334 to 356, 362 to 384, 390 to 412, 418 to 440, 446 to 468, 474 to 496, 502 to 524, 530 to 552, 558 to 580, 586 to 608, 614 to 636, 642 to 664, 670 to 692, 698 to 720, and 726 to 748; these read CKCN…QRTH, YKCN…QRIH, YKCD…QRIH, YTCN…QKIH, FKCD…QKIH, YKCN…HMIH, YECN…QKTH, YDCA…LKIH, YKCN…RRIH, FECS…QKTH, YECK…ERIH, YQCH…RKIH, YKCN…KRIH, YECA…QKTH, YQCN…QRIH, YKCN…QNTH, YNCN…QRIH, and FGCN…QRLH.

The protein belongs to the krueppel C2H2-type zinc-finger protein family. As to expression, predominant expression in testis.

It localises to the nucleus. In terms of biological role, may be involved in transcriptional regulation. The polypeptide is Zinc finger protein 184 (ZNF184) (Homo sapiens (Human)).